A 197-amino-acid chain; its full sequence is Nucleoid occlusion factor SlmA (197 aa).

Residues 7 to 67 (INRREHILQC…GLIEFIEESL (61 aa)) enclose the HTH tetR-type domain. The H-T-H motif DNA-binding region spans 30–49 (TTAKLAAEVGVSEAALYRHF). Positions 109–136 (DALLGENERLRSRISQLFAKIETHLKQI) form a coiled coil.

Belongs to the nucleoid occlusion factor SlmA family. As to quaternary structure, homodimer. Interacts with FtsZ.

The protein localises to the cytoplasm. It localises to the nucleoid. Required for nucleoid occlusion (NO) phenomenon, which prevents Z-ring formation and cell division over the nucleoid. Acts as a DNA-associated cell division inhibitor that binds simultaneously chromosomal DNA and FtsZ, and disrupts the assembly of FtsZ polymers. SlmA-DNA-binding sequences (SBS) are dispersed on non-Ter regions of the chromosome, preventing FtsZ polymerization at these regions. In Shewanella halifaxensis (strain HAW-EB4), this protein is Nucleoid occlusion factor SlmA.